Here is a 328-residue protein sequence, read N- to C-terminus: uncharacterized protein (328 aa).

Ser170 bears the Phosphoserine mark.

Its subcellular location is the cytoplasm. The protein resides in the nucleus. This is an uncharacterized protein from Schizosaccharomyces pombe (strain 972 / ATCC 24843) (Fission yeast).